Reading from the N-terminus, the 427-residue chain is Serine hydroxymethyltransferase (427 aa).

Residues leucine 124 and 128–130 (GHL) each bind (6S)-5,6,7,8-tetrahydrofolate. N6-(pyridoxal phosphate)lysine is present on lysine 233.

The protein belongs to the SHMT family. As to quaternary structure, homodimer. It depends on pyridoxal 5'-phosphate as a cofactor.

The protein resides in the cytoplasm. It carries out the reaction (6R)-5,10-methylene-5,6,7,8-tetrahydrofolate + glycine + H2O = (6S)-5,6,7,8-tetrahydrofolate + L-serine. Its pathway is one-carbon metabolism; tetrahydrofolate interconversion. It functions in the pathway amino-acid biosynthesis; glycine biosynthesis; glycine from L-serine: step 1/1. In terms of biological role, catalyzes the reversible interconversion of serine and glycine with tetrahydrofolate (THF) serving as the one-carbon carrier. This reaction serves as the major source of one-carbon groups required for the biosynthesis of purines, thymidylate, methionine, and other important biomolecules. Also exhibits THF-independent aldolase activity toward beta-hydroxyamino acids, producing glycine and aldehydes, via a retro-aldol mechanism. The sequence is that of Serine hydroxymethyltransferase from Paracoccus denitrificans (strain Pd 1222).